Reading from the N-terminus, the 114-residue chain is Flagellar hook-basal body complex protein FliE (114 aa).

Belongs to the FliE family.

It localises to the bacterial flagellum basal body. In Burkholderia lata (strain ATCC 17760 / DSM 23089 / LMG 22485 / NCIMB 9086 / R18194 / 383), this protein is Flagellar hook-basal body complex protein FliE.